A 103-amino-acid polypeptide reads, in one-letter code: Large ribosomal subunit protein bL21 (103 aa).

It belongs to the bacterial ribosomal protein bL21 family. As to quaternary structure, part of the 50S ribosomal subunit. Contacts protein L20.

In terms of biological role, this protein binds to 23S rRNA in the presence of protein L20. This is Large ribosomal subunit protein bL21 from Nitrosomonas europaea (strain ATCC 19718 / CIP 103999 / KCTC 2705 / NBRC 14298).